The primary structure comprises 445 residues: Questin oxidase (445 aa).

The protein belongs to the questin oxidase family. NADPH serves as cofactor. Specifically expressed in conidia.

The protein operates within secondary metabolite biosynthesis. Questin oxidase; part of the gene cluster that mediates the biosynthesis of trypacidin, a mycotoxin with antiprotozoal activity and that plays a role in the infection process. The pathway begins with the synthesis of atrochrysone thioester by the polyketide synthase (PKS) tpcC. The atrochrysone carboxyl ACP thioesterase tpcB then breaks the thioester bond and releases the atrochrysone carboxylic acid from tpcC. The decarboxylase tpcK converts atrochrysone carboxylic acid to atrochrysone which is further reduced into emodin anthrone. The next step is performed by the emodin anthrone oxygenase tpcL that catalyzes the oxidation of emodinanthrone to emodin. Emodin O-methyltransferase encoded by tpcA catalyzes methylation of the 8-hydroxy group of emodin to form questin. Ring cleavage of questin by questin oxidase tpcI leads to desmethylsulochrin via several intermediates including questin epoxide. Another methylation step catalyzed by tpcM leads to the formation of sulochrin which is further converted to monomethylsulfochrin by tpcH. Finally, the tpcJ catalyzes the conversion of monomethylsulfochrin to trypacidin. Trypacidin is toxic for human pulmonary and bronchial epithelial cells by initiating the intracellular formation of nitric oxide (NO) and hydrogen peroxide (H(2)O(2)), thus triggering host necrotic cell death. The trypacidin pathway is also able to produce endocrocin via a distinct route from the endocrocin Enc pathway. The chain is Questin oxidase from Aspergillus fumigatus (strain ATCC MYA-4609 / CBS 101355 / FGSC A1100 / Af293) (Neosartorya fumigata).